The sequence spans 399 residues: Acetate kinase (399 aa).

Asn-10 provides a ligand contact to Mg(2+). An ATP-binding site is contributed by Lys-17. Position 91 (Arg-91) interacts with substrate. Asp-148 serves as the catalytic Proton donor/acceptor. ATP contacts are provided by residues 208–212, 283–285, and 331–335; these read HLGNG, DCR, and GIGEN. Glu-385 serves as a coordination point for Mg(2+).

This sequence belongs to the acetokinase family. Homodimer. Mg(2+) serves as cofactor. Mn(2+) is required as a cofactor.

The protein resides in the cytoplasm. The enzyme catalyses acetate + ATP = acetyl phosphate + ADP. It participates in metabolic intermediate biosynthesis; acetyl-CoA biosynthesis; acetyl-CoA from acetate: step 1/2. Functionally, catalyzes the formation of acetyl phosphate from acetate and ATP. Can also catalyze the reverse reaction. The chain is Acetate kinase from Shewanella baltica (strain OS223).